Reading from the N-terminus, the 1062-residue chain is Roc-COR-CHAT protease (1062 aa).

LRR repeat units follow at residues 70-94 (LAGLQGLYLAENDFSSLQLPGHLQQ), 95-116 (LRLLHLADNKELKTLEFAGSMP), 115-141 (MPLLEEIDLSDSGIQTLQLPACPALQK), 142-159 (LDVSRSKLEAFSFASACP), 160-180 (ALWWLDLSGNGELRKLKMPAG), 181-203 (FKALQYLYLYKSGIQELQINGKL), 204-226 (PKLVVLDLEGNQLKQWPEKLLLP), and 228-249 (GLETLYLEGNPIENIPETIRGS). A COR domain is found at 470–660 (DWLGVMEELQ…GLMWKDNVVF (191 aa)). The segment at 836-856 (ERDNDHTGLSDSSDQEDETFT) is disordered. Catalysis depends on residues H931 and C980.

Its function is as follows. A dedicated protease for substrate gasdermin bGSDM; cleaves the bGSDM precursor, releasing the pore-forming moiety, which integrates into the membrane and triggers cell death. Probably involved in defense against bacteriophages. Expression of bGSDM and this neighboring protease is highly toxic in E.coli. This chain is Roc-COR-CHAT protease, found in Unknown prokaryotic organism.